The primary structure comprises 257 residues: Protein patched homolog 1 (257 aa).

Residues 1 to 199 (AKLQTGTAYL…LDDILKSFSD (199 aa)) lie on the Extracellular side of the membrane. N-linked (GlcNAc...) asparagine glycans are attached at residues Asn-75, Asn-114, and Asn-177. The helical transmembrane segment at 200 to 220 (ISVIRVASGYLLMLAYACLTM) threads the bilayer. Positions 201 to 257 (SVIRVASGYLLMLAYACLTMLRWDCAKSQGAVGLAGVLLVALSVAAGLGLCSLIGIS) constitute an SSD domain. Topologically, residues 221-235 (LRWDCAKSQGAVGLA) are cytoplasmic. The helical transmembrane segment at 236–256 (GVLLVALSVAAGLGLCSLIGI) threads the bilayer.

This sequence belongs to the patched family. Post-translationally, glycosylation is necessary for SHH binding. As to expression, in the eye, detected in neural retina, iris, retinal pigment epithelium, but not in lens.

It is found in the membrane. In terms of biological role, acts as a receptor for sonic hedgehog (SHH), indian hedgehog (IHH) and desert hedgehog (DHH). Associates with the smoothened protein (SMO) to transduce the hedgehog's proteins signal. This Cynops pyrrhogaster (Japanese fire-bellied newt) protein is Protein patched homolog 1 (PTC1).